The chain runs to 147 residues: 3-hydroxyacyl-[acyl-carrier-protein] dehydratase FabZ (147 aa).

His46 is a catalytic residue.

The protein belongs to the thioester dehydratase family. FabZ subfamily.

Its subcellular location is the cytoplasm. It carries out the reaction a (3R)-hydroxyacyl-[ACP] = a (2E)-enoyl-[ACP] + H2O. In terms of biological role, involved in unsaturated fatty acids biosynthesis. Catalyzes the dehydration of short chain beta-hydroxyacyl-ACPs and long chain saturated and unsaturated beta-hydroxyacyl-ACPs. The chain is 3-hydroxyacyl-[acyl-carrier-protein] dehydratase FabZ from Syntrophobacter fumaroxidans (strain DSM 10017 / MPOB).